The sequence spans 296 residues: Homoserine kinase (296 aa).

84–94 (PLARGLGSSSS) contributes to the ATP binding site.

This sequence belongs to the GHMP kinase family. Homoserine kinase subfamily.

Its subcellular location is the cytoplasm. The enzyme catalyses L-homoserine + ATP = O-phospho-L-homoserine + ADP + H(+). It participates in amino-acid biosynthesis; L-threonine biosynthesis; L-threonine from L-aspartate: step 4/5. Functionally, catalyzes the ATP-dependent phosphorylation of L-homoserine to L-homoserine phosphate. In Lactococcus lactis subsp. cremoris (Streptococcus cremoris), this protein is Homoserine kinase (thrB).